A 340-amino-acid chain; its full sequence is COP9 signalosome complex subunit 5 (340 aa).

The region spanning 52–189 is the MPN domain; sequence VRISATALIK…IGAFRTYPAD (138 aa). Residues His135, His137, and Asp148 each coordinate Zn(2+). A JAMM motif motif is present at residues 135 to 148; sequence HSHPGYGCWLSGID.

The protein belongs to the peptidase M67A family. CSN5 subfamily. Component of the COP9 signalosome (CSN) complex.

The protein resides in the cytoplasm. It localises to the nucleus. Functionally, catalytic Component of the COP9 signalosome (CSN) complex that acts as an regulator of the ubiquitin (Ubl) conjugation pathway by mediating the deneddylation of the cullin subunit of SCF-type E3 ubiquitin-protein ligase complexes. The chain is COP9 signalosome complex subunit 5 (RRI1) from Gibberella zeae (strain ATCC MYA-4620 / CBS 123657 / FGSC 9075 / NRRL 31084 / PH-1) (Wheat head blight fungus).